The primary structure comprises 134 residues: ATP synthase epsilon chain (134 aa).

Belongs to the ATPase epsilon chain family. As to quaternary structure, F-type ATPases have 2 components, CF(1) - the catalytic core - and CF(0) - the membrane proton channel. CF(1) has five subunits: alpha(3), beta(3), gamma(1), delta(1), epsilon(1). CF(0) has three main subunits: a, b and c.

Its subcellular location is the cell membrane. Produces ATP from ADP in the presence of a proton gradient across the membrane. The sequence is that of ATP synthase epsilon chain from Clostridium botulinum (strain Eklund 17B / Type B).